A 992-amino-acid chain; its full sequence is Vacuolar membrane protease (992 aa).

The Cytoplasmic segment spans residues 1–24; sequence MSPAMANPRVRKFNPIAFTPLPVT. A helical transmembrane segment spans residues 25 to 45; that stretch reads FITTIVYLAVLILVLVTYLVV. At 46–390 the chain is on the vacuolar side; that stretch reads PPAPTLEMSP…SAFAVFRLHT (345 aa). N-linked (GlcNAc...) asparagine glycosylation is found at N59, N115, and N118. Residues H174 and D186 each contribute to the Zn(2+) site. E220 functions as the Proton acceptor in the catalytic mechanism. E221 serves as a coordination point for Zn(2+). Residue N237 is glycosylated (N-linked (GlcNAc...) asparagine). Zn(2+) contacts are provided by E246 and H319. Residues 391-411 form a helical membrane-spanning segment; the sequence is LFALSVTLLVIGPLVLFITSI. Over 412–446 the chain is Cytoplasmic; it reads ALSKTDRMYLFSMSKSLGGASETVSLRGLRGLFRT. Residues 447–467 traverse the membrane as a helical segment; the sequence is PIILTVTTVISIGLAYLLEKI. Over 468 to 474 the chain is Vacuolar; sequence NPYIVHS. Residues 475 to 495 traverse the membrane as a helical segment; sequence SQFAVWSMMLSVWIFVAWFLA. Over 496–508 the chain is Cytoplasmic; the sequence is RVADFFRPSALHR. Residues 509–529 traverse the membrane as a helical segment; it reads AYSYTWIFIVTWIMLVISTVY. The Vacuolar segment spans residues 530 to 533; sequence ANQK. Residues 534-554 form a helical membrane-spanning segment; the sequence is GIAAGYFTFFYFAAVFLATWV. The Cytoplasmic segment spans residues 555 to 671; sequence SYLELFSLPR…WSWTLPRWTW (117 aa). The segment at 579-620 is disordered; it reads RSSSLSSRLLTPSADELPSDIGPNGAENVGDPDETDPTESTS. The chain crosses the membrane as a helical span at residues 672–692; that stretch reads ILQLLLLAPIVIILVGQVGLL. At 693–708 the chain is on the vacuolar side; that stretch reads LTTAMSQIGSDGVSTF. Residues 709–729 form a helical membrane-spanning segment; it reads IVYLACALFSTLLFAPLLPFI. At 730-736 the chain is on the cytoplasmic side; it reads HRFTYHV. The chain crosses the membrane as a helical span at residues 737–757; sequence PIFLLLIFIGTLIYNLVAFPF. Residues 758 to 992 lie on the Vacuolar side of the membrane; that stretch reads SPANRLKIFF…VEASHDFIIQ (235 aa). N-linked (GlcNAc...) asparagine glycosylation is found at N805, N846, and N954.

The protein belongs to the peptidase M28 family. Requires Zn(2+) as cofactor.

The protein resides in the vacuole membrane. In terms of biological role, may be involved in vacuolar sorting and osmoregulation. The sequence is that of Vacuolar membrane protease from Paracoccidioides brasiliensis (strain Pb18).